The sequence spans 324 residues: MGCPVSRGGSPGCGRRIAEELRLAEDARLRLALLGRCIVKGSPAQVRKELRAELKAIDAEWRPVIARESLRKELDAIDAEWQHAITFWHISRAIIGSIELSKELDAIDAEWRPVIVRESLRKELKAIDAEWRPAIRLESAYRAIIGSIELSKELKAIDAETQHAVELRRALRTIEGRIELSRELKAIDAEWAPRIAQAKEIAQARESLRKELNDIDAEWAPKIAQAKEIAQAKAELAAATDALKRAADKLQALGKMGTTSTPGTDLIGVVTTAVTTTLAGTQPAPGTDLVGVATPSTALGQPAPSTALTSVAAEVATPSTALGV.

A signal peptide spans 1–32 (MGCPVSRGGSPGCGRRIAEELRLAEDARLRLA). The stretch at 195 to 255 (IAQAKEIAQA…AADKLQALGK (61 aa)) forms a coiled coil.

It is found in the secreted. Associates with actin filament appendages that are formed in the inclusion appendages of the parasitophorous vacuole during infection of the host erythrocyte. This is Appendage-associated protein (aaaP1) from Anaplasma marginale (strain Florida).